Consider the following 329-residue polypeptide: (+)-eremophilene synthase (329 aa).

Asp91 and Glu96 together coordinate Mg(2+). Positions Asp91–Asp95 match the DDXXD motif motif. Residue Arg185 participates in substrate binding. 2 residues coordinate Mg(2+): Asn231 and Ser235. Position 238 (Lys238) interacts with substrate. A Mg(2+)-binding site is contributed by Glu239. Arg317–Tyr318 is a binding site for substrate.

The protein belongs to the terpene synthase family. Requires Mg(2+) as cofactor.

It catalyses the reaction (2E,6E)-farnesyl diphosphate = (+)-eremophilene + diphosphate. It participates in secondary metabolite biosynthesis; terpenoid biosynthesis. Functionally, catalyzes the conversion of (2E,6E)-farnesyl diphosphate (FPP) to yield the bicyclic sesquiterpene eremophilene via a 1,10-cyclization, which requires the abstraction of the pyrophosphate from FPP to yield the (E,E)-germacradienyl cation. The only accepted substrate is farnesyl diphosphate (FPP). The polypeptide is (+)-eremophilene synthase (Sorangium cellulosum (strain So ce56) (Polyangium cellulosum (strain So ce56))).